The primary structure comprises 363 residues: Phosphoserine aminotransferase (363 aa).

Position 42 (Arg-42) interacts with L-glutamate. Pyridoxal 5'-phosphate is bound by residues 76–77 (AS), Trp-101, Thr-151, Asp-170, and Gln-193. An N6-(pyridoxal phosphate)lysine modification is found at Lys-194. 234–235 (NT) contacts pyridoxal 5'-phosphate.

This sequence belongs to the class-V pyridoxal-phosphate-dependent aminotransferase family. SerC subfamily. Homodimer. The cofactor is pyridoxal 5'-phosphate.

The protein localises to the cytoplasm. It catalyses the reaction O-phospho-L-serine + 2-oxoglutarate = 3-phosphooxypyruvate + L-glutamate. The catalysed reaction is 4-(phosphooxy)-L-threonine + 2-oxoglutarate = (R)-3-hydroxy-2-oxo-4-phosphooxybutanoate + L-glutamate. It functions in the pathway amino-acid biosynthesis; L-serine biosynthesis; L-serine from 3-phospho-D-glycerate: step 2/3. Its function is as follows. Catalyzes the reversible conversion of 3-phosphohydroxypyruvate to phosphoserine and of 3-hydroxy-2-oxo-4-phosphonooxybutanoate to phosphohydroxythreonine. This chain is Phosphoserine aminotransferase, found in Listeria monocytogenes serovar 1/2a (strain ATCC BAA-679 / EGD-e).